The chain runs to 122 residues: UPF0102 protein VIBHAR_00890 (122 aa).

It belongs to the UPF0102 family.

In Vibrio campbellii (strain ATCC BAA-1116), this protein is UPF0102 protein VIBHAR_00890.